The primary structure comprises 289 residues: MSSIDKKELEKFEKISHNWWNKDGEFGILHRINPIRLEYIIEKITTHYNRHLSKLTYREELVGNMQHSTAAYALVREDASSRLTHKLPLEAEFEKMSNDISKLEILDVGCGGGLIATPLAAQGFNVTAIDALQSNIETATAYAKENGVKINYLQSTIEELDSDKLYDVVICLEVIEHVENVQQFILNLVKHIKPNGMAIISTINRTKKAYILGIIVAEYILGWVPKNTHDYSKFLKPLEIYEMLTDTKIEIKELKGLVYDPAKNEWKLSDDIDVNYFMCLGRKSMCYPS.

Residue Arg-36 participates in S-adenosyl-L-methionine binding. The 49-residue stretch at 50–98 (RHLSKLTYREELVGNMQHSTAAYALVREDASSRLTHKLPLEAEFEKMSN) folds into the RPE1 insert domain. S-adenosyl-L-methionine is bound by residues Gly-109, Asp-130, and Leu-172.

It belongs to the methyltransferase superfamily. UbiG/COQ3 family.

The enzyme catalyses a 3-demethylubiquinol + S-adenosyl-L-methionine = a ubiquinol + S-adenosyl-L-homocysteine + H(+). It carries out the reaction a 3-(all-trans-polyprenyl)benzene-1,2-diol + S-adenosyl-L-methionine = a 2-methoxy-6-(all-trans-polyprenyl)phenol + S-adenosyl-L-homocysteine + H(+). It functions in the pathway cofactor biosynthesis; ubiquinone biosynthesis. O-methyltransferase that catalyzes the 2 O-methylation steps in the ubiquinone biosynthetic pathway. The polypeptide is Ubiquinone biosynthesis O-methyltransferase (Rickettsia conorii (strain ATCC VR-613 / Malish 7)).